The following is a 311-amino-acid chain: Probable cell division protein WhiA (311 aa).

The H-T-H motif DNA-binding region spans 277–311 (TLKEVADQIPDGPISKSGVNHRFKKLHEIAESLRE).

This sequence belongs to the WhiA family.

Involved in cell division and chromosome segregation. This is Probable cell division protein WhiA from Lactobacillus acidophilus (strain ATCC 700396 / NCK56 / N2 / NCFM).